The chain runs to 130 residues: Small ribosomal subunit protein uS8 (130 aa).

The protein belongs to the universal ribosomal protein uS8 family. In terms of assembly, part of the 30S ribosomal subunit. Contacts proteins S5 and S12.

In terms of biological role, one of the primary rRNA binding proteins, it binds directly to 16S rRNA central domain where it helps coordinate assembly of the platform of the 30S subunit. This Photobacterium profundum (strain SS9) protein is Small ribosomal subunit protein uS8.